Reading from the N-terminus, the 471-residue chain is MFAFYFLTACISLKGVFGVSPSYNGLGLTPQMGWDNWNTFACDVSEQLLLDTADRISDLGLKDMGYKYVILDDCWSSGRDSDGFLVADKHKFPNGMGHVADHLHNNSFLFGMYSSAGEYTCAGYPGSLGREEEDAQFFANNRVDYLKYDNCYNKGQFGTPDVSYHRYKAMSDALNKTGRPIFYSLCNWGQDLTFYWGSGIANSWRMSGDITAEFTRPDSRCPCDGDEYDCKYAGFHCSIMNILNKAAPMGQNAGVGGWNDLDNLEVGVGNLTDDEEKAHFSMWAMVKSPLIIGADVNHLKASSYSIYSQASVIAINQDPKGIPATRVWRYYVSDTDEYGQGEIQMWSGPLDNGDQVVALLNGGSVARPMNTTLEEIFFDSNLGSKELTSTWDIYDLWANRVDNSTASAILEQNKAATGILYNATEQSYKDGLSKNDTRLFGQKIGSLSPNAILNTTVPAHGIAFYRLRPSA.

An N-terminal signal peptide occupies residues 1–18 (MFAFYFLTACISLKGVFG). Cys-42 and Cys-74 are joined by a disulfide. Positions 72 and 73 each coordinate substrate. N-linked (GlcNAc...) asparagine glycosylation occurs at Asn-105. Cys-121 and Cys-151 are joined by a disulfide. Lys-147 is a binding site for substrate. Asp-149 acts as the Nucleophile in catalysis. Asn-175 carries N-linked (GlcNAc...) asparagine glycosylation. Substrate is bound at residue Arg-205. The active-site Proton donor is the Asp-209. Cystine bridges form between Cys-221-Cys-237 and Cys-223-Cys-230. A substrate-binding site is contributed by Gln-251. Asn-270, Asn-370, Asn-403, Asn-422, Asn-435, and Asn-454 each carry an N-linked (GlcNAc...) asparagine glycan.

This sequence belongs to the glycosyl hydrolase 27 family. As to quaternary structure, homotetramer.

It is found in the secreted. The catalysed reaction is Hydrolysis of terminal, non-reducing alpha-D-galactose residues in alpha-D-galactosides, including galactose oligosaccharides, galactomannans and galactolipids.. The protein is Alpha-galactosidase 6 (MEL6) of Saccharomyces cerevisiae (Baker's yeast).